The following is a 408-amino-acid chain: Neutral cholesterol ester hydrolase 1 (408 aa).

Over 1 to 4 (MRSS) the chain is Cytoplasmic. Residues 5 to 25 (CVLLTALVALAAYYVYIPLPG) form a helical; Signal-anchor for type II membrane protein membrane-spanning segment. Over 26–408 (SVSDPWKLML…SYIKWLDQNL (383 aa)) the chain is Lumenal. The short motif at 113–115 (HGG) is the Involved in the stabilization of the negatively charged intermediate by the formation of the oxyanion hole element. The active site involves Ser191. 2 N-linked (GlcNAc...) asparagine glycosylation sites follow: Asn270 and Asn287. Catalysis depends on residues Asp348 and His378. Asn389 carries N-linked (GlcNAc...) asparagine glycosylation.

Belongs to the 'GDXG' lipolytic enzyme family. N-glycosylated.

It is found in the cell membrane. It localises to the microsome. The enzyme catalyses a 1-O-alkyl-2-acetyl-sn-glycerol + H2O = a 1-O-alkyl-sn-glycerol + acetate + H(+). It carries out the reaction 1-O-hexadecyl-2-acetyl-sn-glycerol + H2O = 1-O-hexadecyl-sn-glycerol + acetate + H(+). The catalysed reaction is a cholesterol ester + H2O = cholesterol + a fatty acid + H(+). It catalyses the reaction cholesteryl (9Z-octadecenoate) + H2O = cholesterol + (9Z)-octadecenoate + H(+). Hydrolyzes 2-acetyl monoalkylglycerol ether (1-O-alkyl-2-acetyl-sn-glycerol), the penultimate precursor of the pathway for de novo synthesis of platelet-activating factor. May be responsible for the hydrolysis of cholesterol esters (such as cholesteryl (9Z-octadecenoate)) in macrophages. Also involved in organ detoxification by hydrolyzing exogenous organophosphorus compounds. This chain is Neutral cholesterol ester hydrolase 1 (NCEH1), found in Pongo abelii (Sumatran orangutan).